A 497-amino-acid chain; its full sequence is Galactose/methyl galactoside import ATP-binding protein MglA 1 (497 aa).

2 consecutive ABC transporter domains span residues 6-243 (LEMR…VGRD) and 256-494 (GKVR…VMSM). 38–45 (GENGAGKS) lines the ATP pocket.

It belongs to the ABC transporter superfamily. Galactose/methyl galactoside importer (TC 3.A.1.2.3) family. In terms of assembly, the complex is composed of one ATP-binding protein (MglA), two transmembrane proteins (MglC) and a solute-binding protein (MglB).

Its subcellular location is the cell inner membrane. It carries out the reaction D-galactose(out) + ATP + H2O = D-galactose(in) + ADP + phosphate + H(+). It catalyses the reaction methyl beta-D-galactoside(out) + ATP + H2O = methyl beta-D-galactoside(in) + ADP + phosphate + H(+). Part of the ABC transporter complex MglABC involved in galactose/methyl galactoside import. Responsible for energy coupling to the transport system. The chain is Galactose/methyl galactoside import ATP-binding protein MglA 1 from Photobacterium profundum (strain SS9).